The following is a 33-amino-acid chain: U1-pseudomyrmecitoxin-Pt1 subunit LS2 (33 aa).

The protein belongs to the myrmexin family. Heterodimer composed of subunit LS2 and subunit SS1, heterodimer composed of subunit LS2 and SS2, and heterodimer composed of subunit LS2 and SS3; disulfide-linked. As to expression, expressed by the venom gland.

It is found in the secreted. Its function is as follows. This heterodimer may have anti-inflammatory properties, since the myrmexin complex (composed of 6 SS-LS heterodimers) inhibits carrageenin-induced edema in a dose-dependent manner (after subcutaneous injection into rats). This is U1-pseudomyrmecitoxin-Pt1 subunit LS2 from Pseudomyrmex triplarinus (Ant).